Here is a 487-residue protein sequence, read N- to C-terminus: Probable cobyric acid synthase (487 aa).

The 187-residue stretch at 249-435 folds into the GATase cobBQ-type domain; that stretch reads DVDIAVVRFP…LHGIFNNASF (187 aa). Catalysis depends on Cys328, which acts as the Nucleophile. Residue His427 is part of the active site.

Belongs to the CobB/CobQ family. CobQ subfamily.

It participates in cofactor biosynthesis; adenosylcobalamin biosynthesis. In terms of biological role, catalyzes amidations at positions B, D, E, and G on adenosylcobyrinic A,C-diamide. NH(2) groups are provided by glutamine, and one molecule of ATP is hydrogenolyzed for each amidation. The chain is Probable cobyric acid synthase from Methanocella arvoryzae (strain DSM 22066 / NBRC 105507 / MRE50).